A 27-amino-acid polypeptide reads, in one-letter code: Putative phosphoglycerate kinase (27 aa).

This sequence belongs to the phosphoglycerate kinase family. In terms of assembly, monomer. The cofactor is Mg(2+).

The enzyme catalyses (2R)-3-phosphoglycerate + ATP = (2R)-3-phospho-glyceroyl phosphate + ADP. In Pinus strobus (Eastern white pine), this protein is Putative phosphoglycerate kinase.